The chain runs to 565 residues: O-fucosyltransferase 7 (565 aa).

A helical; Signal-anchor for type II membrane protein transmembrane segment spans residues 17 to 37 (VLIWAICVMTLLCFLTVHIYV). Asn62, Asn73, Asn104, Asn124, and Asn190 each carry an N-linked (GlcNAc...) asparagine glycan. 327 to 329 (HLR) serves as a coordination point for substrate. N-linked (GlcNAc...) asparagine glycosylation is present at Asn441. The segment at 515-565 (NEIHKTRQGSPRRRKGPASGTKGLERHRSEESFYENPLPDCLCQRDPSKAR) is disordered. Over residues 520–530 (TRQGSPRRRKG) the composition is skewed to basic residues.

It belongs to the glycosyltransferase GT106 family.

The protein localises to the membrane. It participates in glycan metabolism. In Arabidopsis thaliana (Mouse-ear cress), this protein is O-fucosyltransferase 7.